A 184-amino-acid chain; its full sequence is NADH-quinone oxidoreductase subunit B (184 aa).

[4Fe-4S] cluster is bound by residues Cys-37, Cys-38, Cys-103, and Cys-132.

It belongs to the complex I 20 kDa subunit family. NDH-1 is composed of 14 different subunits. Subunits NuoB, C, D, E, F, and G constitute the peripheral sector of the complex. The cofactor is [4Fe-4S] cluster.

Its subcellular location is the cell membrane. It carries out the reaction a quinone + NADH + 5 H(+)(in) = a quinol + NAD(+) + 4 H(+)(out). In terms of biological role, NDH-1 shuttles electrons from NADH, via FMN and iron-sulfur (Fe-S) centers, to quinones in the respiratory chain. The immediate electron acceptor for the enzyme in this species is believed to be a menaquinone. Couples the redox reaction to proton translocation (for every two electrons transferred, four hydrogen ions are translocated across the cytoplasmic membrane), and thus conserves the redox energy in a proton gradient. This is NADH-quinone oxidoreductase subunit B from Rhodococcus opacus (strain B4).